Consider the following 305-residue polypeptide: MTQRRAMLILHGKQALNEDVRDAVADKRKQGWELDVRLTWEAGDAQRLVSEALAAGHRHIVAGGGDGTLRDIAEALALAETSASLTILPLGTANDFARAAGVPLEVSKALQLMDVAPRAVDLGEVGGKLFLNMATGGFGSQVTANTSEDLKKVLGGAAYLFTGLTRFSELHSAHGELTGPDFHWRGDLLALGIGNGRQAGGGHELCPTALADDGLLDISILPAPQEVVGTLRSLLEGGLGIDNMFIRARLPWVELKSTQGLDINLDGEPLSGEDLRFEARPGALHVHLPADSPLLGGAPKLNRPD.

Residues 1–129 (MTQRRAMLIL…VDLGEVGGKL (129 aa)) enclose the DAGKc domain. Residues Thr-39, 65 to 71 (GDGTLRD), and Thr-92 contribute to the ATP site. Leu-210, Asp-213, and Leu-215 together coordinate Mg(2+). Catalysis depends on Glu-268, which acts as the Proton acceptor.

Belongs to the diacylglycerol/lipid kinase family. YegS lipid kinase subfamily. The cofactor is Mg(2+). Requires Ca(2+) as cofactor.

The protein localises to the cytoplasm. In terms of biological role, probably phosphorylates lipids; the in vivo substrate is unknown. In Pseudomonas syringae pv. syringae (strain B728a), this protein is Probable lipid kinase YegS-like.